The primary structure comprises 314 residues: WD repeat-containing protein 38 (314 aa).

WD repeat units follow at residues 19 to 58 (QHGGEVNSSAFSPDGQMLLTGSEDGCVYGWETRSGQLLWR), 61 to 100 (GHTGPVKFCRFSPDGHLFASASCDCTVRLWDVARAKCLRV), 103 to 142 (GHQRSVETVSFSPDSRQLASGGWDKRVMLWDVQSGQMLRL), 145 to 184 (GHRDSIQSSDFSPTVNCLATGSWDSTVHIWDLRMVTPAVS), 190 to 228 (GHSANISCLCYSASGLLASGSWDKTIHIWKPTTSSLLIQ), 231 to 272 (GHVT…ETLK), and 274 to 312 (VLDVAHTCAFTPDGKILVSGAADQTRRQISRTSKSPRDP). The tract at residues 294–314 (AADQTRRQISRTSKSPRDPQT) is disordered.

In Homo sapiens (Human), this protein is WD repeat-containing protein 38 (WDR38).